Reading from the N-terminus, the 75-residue chain is Translational regulator CsrA (75 aa).

It belongs to the CsrA/RsmA family. As to quaternary structure, homodimer; the beta-strands of each monomer intercalate to form a hydrophobic core, while the alpha-helices form wings that extend away from the core.

Its subcellular location is the cytoplasm. Functionally, a translational regulator that binds mRNA to regulate translation initiation and/or mRNA stability. Usually binds in the 5'-UTR at or near the Shine-Dalgarno sequence preventing ribosome-binding, thus repressing translation. Its main target seems to be the major flagellin gene, while its function is anatagonized by FliW. This Exiguobacterium sp. (strain ATCC BAA-1283 / AT1b) protein is Translational regulator CsrA.